A 416-amino-acid polypeptide reads, in one-letter code: UDP-N-acetylglucosamine 1-carboxyvinyltransferase (416 aa).

A phosphoenolpyruvate-binding site is contributed by 22 to 23 (KN). Residue Arg92 participates in UDP-N-acetyl-alpha-D-glucosamine binding. Residue Cys116 is the Proton donor of the active site. Cys116 bears the 2-(S-cysteinyl)pyruvic acid O-phosphothioketal mark. Residues Asp304 and Ile326 each coordinate UDP-N-acetyl-alpha-D-glucosamine.

Belongs to the EPSP synthase family. MurA subfamily.

It is found in the cytoplasm. It catalyses the reaction phosphoenolpyruvate + UDP-N-acetyl-alpha-D-glucosamine = UDP-N-acetyl-3-O-(1-carboxyvinyl)-alpha-D-glucosamine + phosphate. The protein operates within cell wall biogenesis; peptidoglycan biosynthesis. Cell wall formation. Adds enolpyruvyl to UDP-N-acetylglucosamine. The sequence is that of UDP-N-acetylglucosamine 1-carboxyvinyltransferase from Solidesulfovibrio magneticus (strain ATCC 700980 / DSM 13731 / RS-1) (Desulfovibrio magneticus).